The chain runs to 83 residues: Small ribosomal subunit protein uS17 (83 aa).

It belongs to the universal ribosomal protein uS17 family. In terms of assembly, part of the 30S ribosomal subunit.

Functionally, one of the primary rRNA binding proteins, it binds specifically to the 5'-end of 16S ribosomal RNA. The chain is Small ribosomal subunit protein uS17 from Buchnera aphidicola subsp. Acyrthosiphon pisum (strain 5A).